Reading from the N-terminus, the 543-residue chain is Probable zinc transporter protein DDB_G0283629 (543 aa).

Residues 1–175 (MENFKNNELE…EESKPLNQLR (175 aa)) form a disordered region. Residues 1–186 (MENFKNNELE…LDSKKKARYS (186 aa)) lie on the Cytoplasmic side of the membrane. 2 stretches are compositionally biased toward low complexity: residues 11–26 (SSPI…SINN) and 41–55 (NNNN…NSHI). 2 stretches are compositionally biased toward basic and acidic residues: residues 56–66 (NNHDHKHNHEH) and 76–104 (HNHD…EHNV). Positions 105 to 116 (GNKNLLTNNNNQ) are enriched in low complexity. The segment covering 130–140 (EDGSSSGGGGG) has biased composition (gly residues). A helical membrane pass occupies residues 187-207 (LILALTLTTIFMVGEIVGGYF). At 208–216 (ANSLAIMTD) the chain is on the extracellular side. A helical transmembrane segment spans residues 217–237 (AAHLLTDIGAMFLSLFAMWIS). Topologically, residues 238 to 251 (QHPPTSSMSFGFHR) are cytoplasmic. The helical transmembrane segment at 252–272 (AEILGALVSVLMIWALTGVLV) threads the bilayer. The Extracellular portion of the chain corresponds to 273-289 (YEAIQRILYPPDAVDGK). A helical membrane pass occupies residues 290–310 (IMFIIASCGLFINIIDAIILH). Residues 311–375 (WGSGGHGHSH…VRNINVHSAY (65 aa)) lie on the Cytoplasmic side of the membrane. The tract at residues 319–342 (SHGGGHGHSHGIGGGTQKKKSKKN) is disordered. A helical transmembrane segment spans residues 376–396 (IHVLGDCFQSIGVMVASCIIW). Over 397–402 (VHPHWK) the chain is Extracellular. Residues 403–423 (IADPITTLIFSVIVLGTTIKL) form a helical membrane-spanning segment. The Cytoplasmic portion of the chain corresponds to 424–543 (LRESLGVLME…NDNLSSPPNQ (120 aa)). Positions 516 to 543 (KCKDHSCPPPKPKKKKIKNDNLSSPPNQ) are disordered.

Belongs to the cation diffusion facilitator (CDF) transporter (TC 2.A.4) family. SLC30A subfamily.

Its subcellular location is the membrane. Its function is as follows. May be involved in zinc transport from the cytoplasm to either intracellular organelles or extracellular spaces. This chain is Probable zinc transporter protein DDB_G0283629, found in Dictyostelium discoideum (Social amoeba).